Consider the following 453-residue polypeptide: Probable glycine dehydrogenase (decarboxylating) subunit 1 (453 aa).

This sequence belongs to the GcvP family. N-terminal subunit subfamily. As to quaternary structure, the glycine cleavage system is composed of four proteins: P, T, L and H. In this organism, the P 'protein' is a heterodimer of two subunits.

It carries out the reaction N(6)-[(R)-lipoyl]-L-lysyl-[glycine-cleavage complex H protein] + glycine + H(+) = N(6)-[(R)-S(8)-aminomethyldihydrolipoyl]-L-lysyl-[glycine-cleavage complex H protein] + CO2. Its function is as follows. The glycine cleavage system catalyzes the degradation of glycine. The P protein binds the alpha-amino group of glycine through its pyridoxal phosphate cofactor; CO(2) is released and the remaining methylamine moiety is then transferred to the lipoamide cofactor of the H protein. This is Probable glycine dehydrogenase (decarboxylating) subunit 1 from Caulobacter sp. (strain K31).